Reading from the N-terminus, the 913-residue chain is Protein translocase subunit SecA (913 aa).

Residues glutamine 87, 105–109, and aspartate 517 contribute to the ATP site; that span reads GEGKT. 2 disordered regions span residues 568-588 and 871-913; these read ESRRIDNQLRGRSGRQGDPGS and EVAV…GKLS. Cysteine 897, cysteine 899, cysteine 908, and histidine 909 together coordinate Zn(2+). Positions 903–913 are enriched in basic residues; that stretch reads KKYKQCHGKLS.

Belongs to the SecA family. Monomer and homodimer. Part of the essential Sec protein translocation apparatus which comprises SecA, SecYEG and auxiliary proteins SecDF-YajC and YidC. Zn(2+) serves as cofactor.

It localises to the cell inner membrane. The protein localises to the cytoplasm. It carries out the reaction ATP + H2O + cellular proteinSide 1 = ADP + phosphate + cellular proteinSide 2.. Part of the Sec protein translocase complex. Interacts with the SecYEG preprotein conducting channel. Has a central role in coupling the hydrolysis of ATP to the transfer of proteins into and across the cell membrane, serving both as a receptor for the preprotein-SecB complex and as an ATP-driven molecular motor driving the stepwise translocation of polypeptide chains across the membrane. In Coxiella burnetii (strain RSA 493 / Nine Mile phase I), this protein is Protein translocase subunit SecA.